The primary structure comprises 72 residues: NAD(P)H-quinone oxidoreductase subunit O (72 aa).

This sequence belongs to the complex I NdhO subunit family. NDH-1 can be composed of about 15 different subunits; different subcomplexes with different compositions have been identified which probably have different functions.

Its subcellular location is the cellular thylakoid membrane. It carries out the reaction a plastoquinone + NADH + (n+1) H(+)(in) = a plastoquinol + NAD(+) + n H(+)(out). The catalysed reaction is a plastoquinone + NADPH + (n+1) H(+)(in) = a plastoquinol + NADP(+) + n H(+)(out). In terms of biological role, NDH-1 shuttles electrons from an unknown electron donor, via FMN and iron-sulfur (Fe-S) centers, to quinones in the respiratory and/or the photosynthetic chain. The immediate electron acceptor for the enzyme in this species is believed to be plastoquinone. Couples the redox reaction to proton translocation, and thus conserves the redox energy in a proton gradient. Cyanobacterial NDH-1 also plays a role in inorganic carbon-concentration. This is NAD(P)H-quinone oxidoreductase subunit O from Crocosphaera subtropica (strain ATCC 51142 / BH68) (Cyanothece sp. (strain ATCC 51142)).